The sequence spans 163 residues: 3-isopropylmalate dehydratase small subunit 2 (163 aa).

The protein belongs to the LeuD family. LeuD type 2 subfamily. Heterodimer of LeuC and LeuD.

It carries out the reaction (2R,3S)-3-isopropylmalate = (2S)-2-isopropylmalate. The protein operates within amino-acid biosynthesis; L-leucine biosynthesis; L-leucine from 3-methyl-2-oxobutanoate: step 2/4. Functionally, catalyzes the isomerization between 2-isopropylmalate and 3-isopropylmalate, via the formation of 2-isopropylmaleate. The chain is 3-isopropylmalate dehydratase small subunit 2 (leuD2) from Pyrococcus abyssi (strain GE5 / Orsay).